Consider the following 246-residue polypeptide: Electron transfer flavoprotein beta subunit lysine methyltransferase (246 aa).

It belongs to the methyltransferase superfamily. ETFBKMT family.

The protein localises to the cytoplasm. It localises to the mitochondrion matrix. It carries out the reaction L-lysyl-[protein] + 3 S-adenosyl-L-methionine = N(6),N(6),N(6)-trimethyl-L-lysyl-[protein] + 3 S-adenosyl-L-homocysteine + 3 H(+). Functionally, protein-lysine methyltransferase that selectively trimethylates the flavoprotein ETFB in mitochondria. Thereby, may negatively regulate the function of ETFB in electron transfer from Acyl-CoA dehydrogenases to the main respiratory chain. The polypeptide is Electron transfer flavoprotein beta subunit lysine methyltransferase (etfbkmt) (Xenopus laevis (African clawed frog)).